The following is a 185-amino-acid chain: Elongation factor P (185 aa).

This sequence belongs to the elongation factor P family.

It is found in the cytoplasm. Its pathway is protein biosynthesis; polypeptide chain elongation. Its function is as follows. Involved in peptide bond synthesis. Stimulates efficient translation and peptide-bond synthesis on native or reconstituted 70S ribosomes in vitro. Probably functions indirectly by altering the affinity of the ribosome for aminoacyl-tRNA, thus increasing their reactivity as acceptors for peptidyl transferase. The chain is Elongation factor P from Metamycoplasma arthritidis (strain 158L3-1) (Mycoplasma arthritidis).